Consider the following 475-residue polypeptide: Peroxisome proliferator-activated receptor gamma (475 aa).

The residue at position 82 (Ser-82) is a Phosphoserine; by MAPK. Residues Ala-106–Phe-180 constitute a DNA-binding region (nuclear receptor). NR C4-type zinc fingers lie at residues Cys-109–Cys-129 and Cys-146–Cys-168. The interaction with FAM120B stretch occupies residues His-175–Met-250. Residues Asp-208–Asp-473 form the NR LBD domain. A Glycyl lysine isopeptide (Lys-Gly) (interchain with G-Cter in ubiquitin) cross-link involves residue Lys-222. Residues Pro-465–Asp-473 carry the 9aaTAD motif.

The protein belongs to the nuclear hormone receptor family. NR1 subfamily. As to quaternary structure, interacts with FOXO1 (acetylated form). Heterodimer with other nuclear receptors, such as RXRA. The heterodimer with the retinoic acid receptor RXRA is called adipocyte-specific transcription factor ARF6. Interacts with NCOA6 coactivator, leading to a strong increase in transcription of target genes. Interacts with coactivator PPARBP, leading to a mild increase in transcription of target genes. Interacts with NOCA7 in a ligand-inducible manner. Interacts with NCOA1 and NCOA2 LXXLL motifs. Interacts with ASXL1, ASXL2, DNTTIP2, FAM120B, MAP2K1/MEK1, NR0B2, PDPK1, PRDM16, PRMT2 and TGFB1I1. Interacts (when activated by agonist) with PPP5C. Interacts with HELZ2 and THRAP3; the interaction stimulates the transcriptional activity of PPARG. Interacts with PER2, the interaction is ligand dependent and blocks PPARG recruitment to target promoters. Interacts with NOCT. Interacts with ACTN4. Interacts (when in the liganded conformation) with GPS2. Interacts with CRY1 and CRY2 in a ligand-dependent manner. In the absence of hormonal ligand, interacts with TACC1. In macrophages, interacts with PAQR3 and STUB1; the interactions promote PPARG poylubiquitination and STUB1-mediated degradation. Phosphorylated at basal conditions and dephosphorylated when treated with the ligand. May be dephosphorylated by PPP5C. The phosphorylated form may be inactive and dephosphorylation induces adipogenic activity. In terms of processing, ubiquitinated by E3 ubiquitin-protein ligase complex containing FBXO9; leading to proteasomal degradation. Ubiquitinated at Lys-222 by TRIM55 leading to proteasomal degradation. Ubiquitinated by E3 ubiquitin-protein ligase STUB1/CHIP; leading to proteasomal degradation.

It localises to the nucleus. The protein localises to the cytoplasm. With respect to regulation, PDPK1 activates its transcriptional activity independently of its kinase activity. In terms of biological role, nuclear receptor that binds peroxisome proliferators such as hypolipidemic drugs and fatty acids. Once activated by a ligand, the nuclear receptor binds to DNA specific PPAR response elements (PPRE) and modulates the transcription of its target genes, such as acyl-CoA oxidase. It therefore controls the peroxisomal beta-oxidation pathway of fatty acids. Key regulator of adipocyte differentiation and glucose homeostasis. ARF6 acts as a key regulator of the tissue-specific adipocyte P2 (aP2) enhancer. Acts as a critical regulator of gut homeostasis by suppressing NF-kappa-B-mediated pro-inflammatory responses. Plays a role in the regulation of cardiovascular circadian rhythms by regulating the transcription of BMAL1 in the blood vessels. The chain is Peroxisome proliferator-activated receptor gamma (PPARG) from Oryctolagus cuniculus (Rabbit).